Here is a 378-residue protein sequence, read N- to C-terminus: MAQKAPGVITCKAAVVWELGGPVVLEEIRVDPPKASEVRIKMLCASLCHTDVLCTKGFPIPLFPRIPGHEGVGVIESVGKDAKGLKPGDIVMPLYLGECGQCLNCKTGKTNLCHVYPPSFSGLMNDGTSRMSIARTGESIYHFASCSTWTEYAVADCNYVLKINPKISYPHASFLSCGFTTGFGATWRETQVSKGSSVAVFGIGTVGLGVIKGAQLQGASKIIGVDVNQYKAAKGKVFGMTDFINPKDHPDKSVSELVKELTHGLGVDHCFECTGVPSLLNEALEASKIGIGTVVPIGAGGEASVAINSLILFSGRTLKFTAFGGVRTQSDLPVIIDKCLNKEIQLDELLTHEIHLDNIQEAFEILKKPDCVKILIKF.

Cys48 contributes to the Zn(2+) binding site. An NAD(+)-binding site is contributed by 49 to 53; the sequence is HTDVL. Zn(2+) is bound by residues His69, Cys99, Cys102, Cys105, Cys113, and Cys177. Residues 202 to 207, Asp226, Lys231, 274 to 276, 297 to 299, and 321 to 323 each bind NAD(+); these read GIGTVG, TGV, IGA, and TAF.

The protein belongs to the zinc-containing alcohol dehydrogenase family. Class-IV subfamily. As to quaternary structure, homodimer. Requires Zn(2+) as cofactor. In terms of tissue distribution, present in non-glandular trichome cells.

Its subcellular location is the nucleus. The protein resides in the cytoplasm. It localises to the cytosol. It carries out the reaction (+)-artemisinic alcohol + NAD(+) = (+)-artemisinic aldehyde + NADH + H(+). The protein operates within sesquiterpene biosynthesis. Involved in the biosynthesis of the antimalarial endoperoxide artemisinin. Catalyzes the conversion of artemisinic alcohol into artemisinic aldehyde. The polypeptide is Alcohol dehydrogenase 1 (Artemisia annua (Sweet wormwood)).